A 492-amino-acid polypeptide reads, in one-letter code: N-succinylglutamate 5-semialdehyde dehydrogenase (492 aa).

Position 220-225 (220-225 (GSANTG)) interacts with NAD(+). Residues Glu243 and Cys277 contribute to the active site.

The protein belongs to the aldehyde dehydrogenase family. AstD subfamily.

The catalysed reaction is N-succinyl-L-glutamate 5-semialdehyde + NAD(+) + H2O = N-succinyl-L-glutamate + NADH + 2 H(+). It participates in amino-acid degradation; L-arginine degradation via AST pathway; L-glutamate and succinate from L-arginine: step 4/5. Catalyzes the NAD-dependent reduction of succinylglutamate semialdehyde into succinylglutamate. The sequence is that of N-succinylglutamate 5-semialdehyde dehydrogenase from Escherichia coli O157:H7.